Reading from the N-terminus, the 205-residue chain is uncharacterized protein (205 aa).

Residues 1-82 enclose the GST N-terminal domain; that stretch reads MIKVYGVPGW…MVLDRRPDLA (82 aa). Residues Val53 and 66–67 contribute to the glutathione site; that span reads ET. Positions 86 to 205 constitute a GST C-terminal domain; that stretch reads GRAERQLFQR…QEVLKRNEII (120 aa).

This sequence belongs to the GST superfamily. Beta family.

This is an uncharacterized protein from Escherichia coli (strain K12).